A 545-amino-acid chain; its full sequence is MGQVLPVFAHCKEAPSTASSTPDSTEGGNDDSDFRELHTAREFSEEDEEETTSQDWGTPRELTFSYIAFDGVVGSGGRRDSTARRPRPQGRSVSEPRDQHPQPSLGDSLESIPSLSQSPEPGRRGDPDTAPPSERPLEDLRLRLDHLGWVARGTGSGEDSSTSSSTPLEDEEPQEPNRLETGEAGEELDLRLRLAQPSSPEVLTPQLSPGSGTPQAGTPSPSRSRDSNSGPEEPLLEEEEKQWGPLEREPVRGQCLDSTDQLEFTVEPRLLGTAMEWLKTSLLLAVYKTVPILELSPPLWTAIGWVQRGPTPPTPVLRVLLKWAKSPRSSGVPSLSLGADMGSKVADLLYWKDTRTSGVVFTGLMVSLLCLLHFSIVSVAAHLALLLLCGTISLRVYRKVLQAVHRGDGANPFQAYLDVDLTLTREQTERLSHQITSRVVSAATQLRHFFLVEDLVDSLKLALLFYILTFVGAIFNGLTLLILGVIGLFTIPLLYRQHQAQIDQYVGLVTNQLSHIKAKIRAKIPGTGALASAAAAVSGSKAKAE.

2 disordered regions span residues 1 to 183 and 199 to 250; these read MGQV…ETGE and SPEV…EREP. Low complexity predominate over residues 14-25; sequence APSTASSTPDST. Over residues 32–43 the composition is skewed to basic and acidic residues; sequence SDFRELHTAREF. The residue at position 44 (Ser-44) is a Phosphoserine. Positions 135 to 146 are enriched in basic and acidic residues; it reads RPLEDLRLRLDH. The span at 157-166 shows a compositional bias: low complexity; that stretch reads GEDSSTSSST. The span at 199-230 shows a compositional bias: polar residues; sequence SPEVLTPQLSPGSGTPQAGTPSPSRSRDSNSG. Ser-227 and Ser-229 each carry phosphoserine. The region spanning 345–545 is the Reticulon domain; sequence VADLLYWKDT…AVSGSKAKAE (201 aa). 2 consecutive transmembrane segments (helical) span residues 368–388 and 463–483; these read LLCL…LLLL and LLFY…LLIL.

As to quaternary structure, interacts with isoform 1 but not isoform 3 of SPAST. Interacts with BACE1. Interacts (via first transmembrane domain) with ARL6IP5/GTRAP3-18. Interacts (via N-terminus) with SLC1A1/EAAC1; the interaction promotes cell surface expression of SLC1A1. In terms of assembly, interacts with TMEM33. As to expression, highly expressed in skeletal muscle.

The protein localises to the endoplasmic reticulum membrane. The protein resides in the sarcoplasmic reticulum membrane. It localises to the cell membrane. Its subcellular location is the sarcolemma. It is found in the T-tubule. The protein localises to the cytoplasm. The protein resides in the myofibril. It localises to the sarcomere. Its subcellular location is the z line. It is found in the cytoskeleton. Its function is as follows. Inhibits amyloid precursor protein processing, probably by blocking BACE1 activity. Enhances trafficking of the glutamate transporter SLC1A1/EAAC1 from the endoplasmic reticulum to the cell surface. Plays a role in the translocation of SLC2A4/GLUT4 from intracellular membranes to the cell membrane which facilitates the uptake of glucose into the cell. In Homo sapiens (Human), this protein is Reticulon-2 (RTN2).